A 343-amino-acid polypeptide reads, in one-letter code: Allergin-1 (343 aa).

The N-terminal stretch at 1-19 (MWSHLNRLLFWSIFSSVTC) is a signal peptide. The Extracellular segment spans residues 20–227 (RKAVLDCEAM…GGDSCPFCLK (208 aa)). Ig-like C2-type domains follow at residues 35 to 118 (PSPC…RDFS) and 128 to 213 (PVLN…HPVT). N-linked (GlcNAc...) asparagine glycosylation is found at N51, N60, N89, N151, N157, and N182. Intrachain disulfides connect C56/C103 and C147/C196. A helical membrane pass occupies residues 228-248 (LLLPGLLLLLVVIILILAFWV). Topologically, residues 249–343 (LPKYKTRKAM…SGYVYSELNF (95 aa)) are cytoplasmic. Short sequence motifs (ITIM motif) lie at residues 311–316 (LQYATP) and 336–341 (YVYSEL). Phosphotyrosine is present on residues Y313 and Y338.

In terms of assembly, monomer. Interacts (tyrosine-phosphorylated) with PTPN6, PTPN11 and INPP5D. N-glycosylated. In terms of tissue distribution, expressed in myeloid cells (dendritic cells, macrophages and neutrophils, weak expression on B-cells but not in T-cells or natural killer cells), peripheral blood basophils and mast cells (at protein level).

It localises to the cell membrane. Immunoglobulin-like receptor which plays an inhibitory role in degranulation of mast cells. Negatively regulates IgE-mediated mast cell activation and suppresses the type I immediate hypersensitivity reaction. The polypeptide is Allergin-1 (MILR1) (Homo sapiens (Human)).